The following is a 1006-amino-acid chain: DNA polymerase (1006 aa).

It belongs to the DNA polymerase type-B family. In terms of assembly, interacts with OPG148. Component of the Uracil-DNA glycosylase(UDG)-OPG148-polymerase complex; OPG148 and OPG116/UDG form a heterodimeric processivity factor that associates with OPG071 to form the processive polymerase holoenzyme.

The catalysed reaction is DNA(n) + a 2'-deoxyribonucleoside 5'-triphosphate = DNA(n+1) + diphosphate. Catalyzes DNA synthesis. Acquires processivity by associating with a heterodimeric processivity factor comprised of the viral OPG148 and OPG116 proteins, thereby forming the DNA polymerase holoenzyme. Displays 3'- to 5' exonuclease activity. Might participate in viral DNA recombination. Does not perform OPG116/D4synthesis across an abasic site. The chain is DNA polymerase (OPG071) from Homo sapiens (Human).